The sequence spans 154 residues: MTTTTTFKGVDPNSRNSSRVLRPPGGGSNFSLGFDEPAEQPVRKNKMASNIFGTPEENPPSWAKSAGSKSSGGREDSESPGTQRSNSSEASSGDFLDLKGEGDMHENVDTDFQANLAQMEEKPVPAAPVPSPVAPAPVPSRRNPPGGKSSLVLG.

At M1 the chain carries N-acetylmethionine. The segment covering 1–19 (MTTTTTFKGVDPNSRNSSR) has biased composition (polar residues). Positions 1 to 154 (MTTTTTFKGV…PGGKSSLVLG (154 aa)) are disordered. An N-acetylthreonine; in Hematological and neurological expressed 1 protein, N-terminally processed modification is found at T2. Phosphoserine occurs at positions 28 and 31. T54 carries the post-translational modification Phosphothreonine. Residues S71, S87, S88, and S92 each carry the phosphoserine modification. The segment covering 79 to 91 (SPGTQRSNSSEAS) has biased composition (polar residues). Positions 96–108 (LDLKGEGDMHENV) are enriched in basic and acidic residues. Over residues 125–138 (PAAPVPSPVAPAPV) the composition is skewed to pro residues. Position 131 is a phosphoserine (S131). The residue at position 148 (K148) is an N6-acetyllysine.

The protein belongs to the JUPITER family. As to quaternary structure, interacts with the complex composed, at least, of APC, CTNNB1 and GSK3B; the interaction takes place with the inactive form of GSK3B (phosphorylated at 'Ser-9'). As to expression, expressed in yolk sac, fetal brain, brain, spleen and bone marrow.

Its subcellular location is the nucleus. The protein localises to the cytoplasm. In terms of biological role, modulates negatively AKT-mediated GSK3B signaling. Induces CTNNB1 'Ser-33' phosphorylation and degradation through the suppression of the inhibitory 'Ser-9' phosphorylation of GSK3B, which represses the function of the APC:CTNNB1:GSK3B complex and the interaction with CDH1/E-cadherin in adherent junctions. Plays a role in the regulation of cell cycle and cell adhesion. Has an inhibitory role on AR-signaling pathway through the induction of receptor proteasomal degradation. This Mus musculus (Mouse) protein is Jupiter microtubule associated homolog 1.